Here is a 158-residue protein sequence, read N- to C-terminus: SsrA-binding protein (158 aa).

Residues 131–158 (GKKTHDKRETEKKRDWNREKARLLRDRG) form a disordered region. Basic and acidic residues predominate over residues 136–158 (DKRETEKKRDWNREKARLLRDRG).

It belongs to the SmpB family.

The protein localises to the cytoplasm. In terms of biological role, required for rescue of stalled ribosomes mediated by trans-translation. Binds to transfer-messenger RNA (tmRNA), required for stable association of tmRNA with ribosomes. tmRNA and SmpB together mimic tRNA shape, replacing the anticodon stem-loop with SmpB. tmRNA is encoded by the ssrA gene; the 2 termini fold to resemble tRNA(Ala) and it encodes a 'tag peptide', a short internal open reading frame. During trans-translation Ala-aminoacylated tmRNA acts like a tRNA, entering the A-site of stalled ribosomes, displacing the stalled mRNA. The ribosome then switches to translate the ORF on the tmRNA; the nascent peptide is terminated with the 'tag peptide' encoded by the tmRNA and targeted for degradation. The ribosome is freed to recommence translation, which seems to be the essential function of trans-translation. This Brucella ovis (strain ATCC 25840 / 63/290 / NCTC 10512) protein is SsrA-binding protein.